The following is a 473-amino-acid chain: MSRGHKKITVLGAGVAGLVAAHELEELGHEVEVLEGSDRLGGRVHTHRFGEGGSVPFVELGAMRIPTKHRHTIDYIGKLGLTPKLKEFKTLFSDDGAYHTTSAGFVRVRDAAKVLVDEFRLLMSGRDLREETILFGAWLTAVGDAIAPADFRAALRTDFTADLLEVVDRIDLDPFLVGAARDQFDLHAFFAAHPEVRTSCTGKLNRFVDDILDETSPRLLRLEGGMDQLVDALVERIRGDIRTGHEVSAIDVREDHVAVTVHNGHGVNTLRSDHVLCTIPFSVLRNLRLTGLSTDKLEIIHDVKYWSATKVAFRCREPFWERDGINGGASFGGGRIRQTYYPPVEGDPTRGAVLLASYTMGDDADVLGGMPEAQRHEVVLDEVGRMHPELHEPGMVVEAVSRAWGEDRWSNGAGVTRWGKDVAACEEERDRAARPEGRLYFAGEHCSSTTAWIDGAVESALAAVRAIEAGDGR.

Positions 1-21 (MSRGHKKITVLGAGVAGLVAA) are cleaved as a signal peptide. FAD is bound by residues 15 to 16 (VA), 35 to 36 (EG), arginine 43, 61 to 64 (GAMR), glutamate 444, and 451 to 456 (AWIDGA).

The protein belongs to the flavin monoamine oxidase family. RebO subfamily. Homodimer. It depends on FAD as a cofactor.

It catalyses the reaction 7-chloro-L-tryptophan + O2 = 3-(7-chloroindol-3-yl)-2-iminopropanoate + H2O2. The catalysed reaction is L-tryptophan + O2 = 2-iminio-3-(indol-3-yl)propanoate + H2O2. In terms of biological role, involved in the biosynthesis of the indolocarbazole antitumor agent rebeccamycin. It generates the imine form of 7-chloroindole 3-pyruvate (7Cl-IPA) from 7-chloro-L-tryptophan (7Cl-Trp), with concomitant two-electron reduction of O(2) to H(2)O(2). The enzyme is also active with L-tryptophan as substrate. This is Flavin-dependent L-tryptophan oxidase RebO (rebO) from Lentzea aerocolonigenes (Lechevalieria aerocolonigenes).